Consider the following 117-residue polypeptide: Large ribosomal subunit protein bL20 (117 aa).

It belongs to the bacterial ribosomal protein bL20 family.

In terms of biological role, binds directly to 23S ribosomal RNA and is necessary for the in vitro assembly process of the 50S ribosomal subunit. It is not involved in the protein synthesizing functions of that subunit. The sequence is that of Large ribosomal subunit protein bL20 from Crocosphaera subtropica (strain ATCC 51142 / BH68) (Cyanothece sp. (strain ATCC 51142)).